Reading from the N-terminus, the 124-residue chain is Urease subunit beta (124 aa).

This sequence belongs to the urease beta subunit family. As to quaternary structure, heterotrimer of UreA (gamma), UreB (beta) and UreC (alpha) subunits. Three heterotrimers associate to form the active enzyme.

The protein localises to the cytoplasm. The enzyme catalyses urea + 2 H2O + H(+) = hydrogencarbonate + 2 NH4(+). It functions in the pathway nitrogen metabolism; urea degradation; CO(2) and NH(3) from urea (urease route): step 1/1. In Halalkalibacterium halodurans (strain ATCC BAA-125 / DSM 18197 / FERM 7344 / JCM 9153 / C-125) (Bacillus halodurans), this protein is Urease subunit beta.